The following is a 309-amino-acid chain: tRNA dimethylallyltransferase (309 aa).

Position 13–20 (13–20 (GPTAVGKS)) interacts with ATP. 15 to 20 (TAVGKS) provides a ligand contact to substrate.

The protein belongs to the IPP transferase family. As to quaternary structure, monomer. Mg(2+) is required as a cofactor.

It catalyses the reaction adenosine(37) in tRNA + dimethylallyl diphosphate = N(6)-dimethylallyladenosine(37) in tRNA + diphosphate. Its function is as follows. Catalyzes the transfer of a dimethylallyl group onto the adenine at position 37 in tRNAs that read codons beginning with uridine, leading to the formation of N6-(dimethylallyl)adenosine (i(6)A). The protein is tRNA dimethylallyltransferase of Lacticaseibacillus casei (strain BL23) (Lactobacillus casei).